Consider the following 382-residue polypeptide: Lipoyl synthase, mitochondrial (382 aa).

The N-terminal 30 residues, 1–30 (MHGRRHLAASLARALTYAPSRSISSTPSLL), are a transit peptide targeting the mitochondrion. Positions 25-34 (STPSLLQTLD) are enriched in polar residues. A disordered region spans residues 25–46 (STPSLLQTLDPSTPSPAAAPPT). [4Fe-4S] cluster-binding residues include Cys-112, Cys-117, Cys-123, Cys-143, Cys-147, Cys-150, and Ser-359. In terms of domain architecture, Radical SAM core spans 128–348 (ETGTATATIM…RSLGVDMGFR (221 aa)).

The protein belongs to the radical SAM superfamily. Lipoyl synthase family. The cofactor is [4Fe-4S] cluster.

It is found in the mitochondrion. It catalyses the reaction [[Fe-S] cluster scaffold protein carrying a second [4Fe-4S](2+) cluster] + N(6)-octanoyl-L-lysyl-[protein] + 2 oxidized [2Fe-2S]-[ferredoxin] + 2 S-adenosyl-L-methionine + 4 H(+) = [[Fe-S] cluster scaffold protein] + N(6)-[(R)-dihydrolipoyl]-L-lysyl-[protein] + 4 Fe(3+) + 2 hydrogen sulfide + 2 5'-deoxyadenosine + 2 L-methionine + 2 reduced [2Fe-2S]-[ferredoxin]. It participates in protein modification; protein lipoylation via endogenous pathway; protein N(6)-(lipoyl)lysine from octanoyl-[acyl-carrier-protein]: step 2/2. Catalyzes the radical-mediated insertion of two sulfur atoms into the C-6 and C-8 positions of the octanoyl moiety bound to the lipoyl domains of lipoate-dependent enzymes, thereby converting the octanoylated domains into lipoylated derivatives. The polypeptide is Lipoyl synthase, mitochondrial (Oryza sativa subsp. japonica (Rice)).